The primary structure comprises 458 residues: Phosphoglucosamine mutase (458 aa).

Ser-106 functions as the Phosphoserine intermediate in the catalytic mechanism. Residues Ser-106, Asp-247, Asp-249, and Asp-251 each contribute to the Mg(2+) site. Ser-106 bears the Phosphoserine mark.

This sequence belongs to the phosphohexose mutase family. Mg(2+) serves as cofactor. In terms of processing, activated by phosphorylation.

The catalysed reaction is alpha-D-glucosamine 1-phosphate = D-glucosamine 6-phosphate. Functionally, catalyzes the conversion of glucosamine-6-phosphate to glucosamine-1-phosphate. The chain is Phosphoglucosamine mutase from Chlamydia felis (strain Fe/C-56) (Chlamydophila felis).